Reading from the N-terminus, the 213-residue chain is Putative thiamine-phosphate synthase (213 aa).

Residues Gln38–Lys42 and Asn70 contribute to the 4-amino-2-methyl-5-(diphosphooxymethyl)pyrimidine site. Asp71 lines the Mg(2+) pocket. 4-amino-2-methyl-5-(diphosphooxymethyl)pyrimidine is bound at residue Ser109. Thr135–Ser137 contacts 2-[(2R,5Z)-2-carboxy-4-methylthiazol-5(2H)-ylidene]ethyl phosphate. Lys138 provides a ligand contact to 4-amino-2-methyl-5-(diphosphooxymethyl)pyrimidine. 2-[(2R,5Z)-2-carboxy-4-methylthiazol-5(2H)-ylidene]ethyl phosphate-binding positions include Gly166 and Ile186–Ser187.

The protein belongs to the thiamine-phosphate synthase family. The cofactor is Mg(2+).

It carries out the reaction 2-[(2R,5Z)-2-carboxy-4-methylthiazol-5(2H)-ylidene]ethyl phosphate + 4-amino-2-methyl-5-(diphosphooxymethyl)pyrimidine + 2 H(+) = thiamine phosphate + CO2 + diphosphate. The enzyme catalyses 2-(2-carboxy-4-methylthiazol-5-yl)ethyl phosphate + 4-amino-2-methyl-5-(diphosphooxymethyl)pyrimidine + 2 H(+) = thiamine phosphate + CO2 + diphosphate. It catalyses the reaction 4-methyl-5-(2-phosphooxyethyl)-thiazole + 4-amino-2-methyl-5-(diphosphooxymethyl)pyrimidine + H(+) = thiamine phosphate + diphosphate. It functions in the pathway cofactor biosynthesis; thiamine diphosphate biosynthesis; thiamine phosphate from 4-amino-2-methyl-5-diphosphomethylpyrimidine and 4-methyl-5-(2-phosphoethyl)-thiazole: step 1/1. Its function is as follows. Condenses 4-methyl-5-(beta-hydroxyethyl)thiazole monophosphate (THZ-P) and 2-methyl-4-amino-5-hydroxymethyl pyrimidine pyrophosphate (HMP-PP) to form thiamine monophosphate (TMP). This is Putative thiamine-phosphate synthase (thiE) from Geobacter sulfurreducens (strain ATCC 51573 / DSM 12127 / PCA).